A 120-amino-acid polypeptide reads, in one-letter code: Cell cycle protein GpsB (120 aa).

A coiled-coil region spans residues 34-74; that stretch reads LDDVIKDYDTYNKELERLNDENERLRAKVDELNRQVEVGSS. Positions 69–90 are disordered; sequence VEVGSSMSNQTASRQPVSSATN. Positions 71–90 are enriched in polar residues; the sequence is VGSSMSNQTASRQPVSSATN.

The protein belongs to the GpsB family. Forms polymers through the coiled coil domains. Interacts with PBP1, MreC and EzrA.

The protein resides in the cytoplasm. Its function is as follows. Divisome component that associates with the complex late in its assembly, after the Z-ring is formed, and is dependent on DivIC and PBP2B for its recruitment to the divisome. Together with EzrA, is a key component of the system that regulates PBP1 localization during cell cycle progression. Its main role could be the removal of PBP1 from the cell pole after pole maturation is completed. Also contributes to the recruitment of PBP1 to the division complex. Not essential for septum formation. This chain is Cell cycle protein GpsB, found in Limosilactobacillus reuteri (strain DSM 20016) (Lactobacillus reuteri).